The following is a 207-amino-acid chain: 8-oxoguanine DNA glycosylase/AP lyase (207 aa).

Catalysis depends on residues Lys129 and Asp147.

Belongs to the type-2 OGG1 family.

The catalysed reaction is 2'-deoxyribonucleotide-(2'-deoxyribose 5'-phosphate)-2'-deoxyribonucleotide-DNA = a 3'-end 2'-deoxyribonucleotide-(2,3-dehydro-2,3-deoxyribose 5'-phosphate)-DNA + a 5'-end 5'-phospho-2'-deoxyribonucleoside-DNA + H(+). In terms of biological role, catalyzes the excision of an oxidatively damaged form of guanine (7,8-dihydro-8-oxoguanine = 8-oxoG) from DNA. Also cleaves the DNA backbone at apurinic/apyrimidinic sites (AP sites). Has little specificity for the base opposite oxoG. This chain is 8-oxoguanine DNA glycosylase/AP lyase, found in Methanocaldococcus jannaschii (strain ATCC 43067 / DSM 2661 / JAL-1 / JCM 10045 / NBRC 100440) (Methanococcus jannaschii).